Here is a 716-residue protein sequence, read N- to C-terminus: Fatty acid oxidation complex subunit alpha (716 aa).

The enoyl-CoA hydratase/isomerase stretch occupies residues 1-189 (MIYQSPTIQV…KVGAVDAVVA (189 aa)). A substrate-binding site is contributed by D296. The interval 311–716 (KAVNSAAVLG…AANNGSYYQA (406 aa)) is 3-hydroxyacyl-CoA dehydrogenase. Residues M324, D343, 400–402 (VVE), K407, and S429 contribute to the NAD(+) site. H450 functions as the For 3-hydroxyacyl-CoA dehydrogenase activity in the catalytic mechanism. Residue N453 participates in NAD(+) binding. Residues N500 and Y660 each coordinate substrate.

The protein in the N-terminal section; belongs to the enoyl-CoA hydratase/isomerase family. In the C-terminal section; belongs to the 3-hydroxyacyl-CoA dehydrogenase family. As to quaternary structure, heterotetramer of two alpha chains (FadB) and two beta chains (FadA).

The catalysed reaction is a (3S)-3-hydroxyacyl-CoA + NAD(+) = a 3-oxoacyl-CoA + NADH + H(+). It catalyses the reaction a (3S)-3-hydroxyacyl-CoA = a (2E)-enoyl-CoA + H2O. It carries out the reaction a 4-saturated-(3S)-3-hydroxyacyl-CoA = a (3E)-enoyl-CoA + H2O. The enzyme catalyses (3S)-3-hydroxybutanoyl-CoA = (3R)-3-hydroxybutanoyl-CoA. The catalysed reaction is a (3Z)-enoyl-CoA = a 4-saturated (2E)-enoyl-CoA. It catalyses the reaction a (3E)-enoyl-CoA = a 4-saturated (2E)-enoyl-CoA. Its pathway is lipid metabolism; fatty acid beta-oxidation. Involved in the aerobic and anaerobic degradation of long-chain fatty acids via beta-oxidation cycle. Catalyzes the formation of 3-oxoacyl-CoA from enoyl-CoA via L-3-hydroxyacyl-CoA. It can also use D-3-hydroxyacyl-CoA and cis-3-enoyl-CoA as substrate. This Shewanella oneidensis (strain ATCC 700550 / JCM 31522 / CIP 106686 / LMG 19005 / NCIMB 14063 / MR-1) protein is Fatty acid oxidation complex subunit alpha.